We begin with the raw amino-acid sequence, 435 residues long: tRNA modification GTPase MnmE (435 aa).

Residues Arg-20, Glu-77, and Lys-117 each contribute to the (6S)-5-formyl-5,6,7,8-tetrahydrofolate site. Residues 214–359 (GIKVVIVGVP…FLKEIESFCL (146 aa)) enclose the TrmE-type G domain. GTP-binding positions include 224-229 (NSGKSS), 243-249 (TEEEGTT), and 268-271 (DTAG). Residues Ser-228 and Thr-249 each contribute to the Mg(2+) site. Lys-435 is a (6S)-5-formyl-5,6,7,8-tetrahydrofolate binding site.

The protein belongs to the TRAFAC class TrmE-Era-EngA-EngB-Septin-like GTPase superfamily. TrmE GTPase family. As to quaternary structure, homodimer. Heterotetramer of two MnmE and two MnmG subunits. It depends on K(+) as a cofactor.

The protein resides in the cytoplasm. In terms of biological role, exhibits a very high intrinsic GTPase hydrolysis rate. Involved in the addition of a carboxymethylaminomethyl (cmnm) group at the wobble position (U34) of certain tRNAs, forming tRNA-cmnm(5)s(2)U34. The protein is tRNA modification GTPase MnmE of Bartonella bacilliformis (strain ATCC 35685 / KC583 / Herrer 020/F12,63).